We begin with the raw amino-acid sequence, 464 residues long: Hepatocyte nuclear factor 4-alpha (464 aa).

Residues 57–132 (NSLCAICGDR…AGMKKEAVQN (76 aa)) constitute a DNA-binding region (nuclear receptor). 2 NR C4-type zinc fingers span residues 60–80 (CAIC…CDGC) and 96–120 (CRFS…LKKC). The 230-residue stretch at 147 to 376 (SSLPSINVLI…NLLQEMLLGG (230 aa)) folds into the NR LBD domain. Residues 367–375 (NLLQEMLLG) carry the 9aaTAD motif. Over residues 410–421 (SQLHNGQMSTPE) the composition is skewed to polar residues. The segment at 410-433 (SQLHNGQMSTPETPQPSPPAGSGA) is disordered.

The protein belongs to the nuclear hormone receptor family. NR2 subfamily. In terms of assembly, homodimerization is required for HNF4-alpha to bind to its recognition site. Expressed in liver and kidney.

The protein localises to the nucleus. Functionally, transcriptional regulator; binds and activates the promoter for the HNF1-alpha gene. Potential initiator of a transcriptional cascade within a subset of cells committed to a specific developmental program. Could be a determinant for asymmetry in early development. May play a role in the regulation of the circadian clock. The sequence is that of Hepatocyte nuclear factor 4-alpha (hnf4a) from Xenopus laevis (African clawed frog).